Here is a 259-residue protein sequence, read N- to C-terminus: Undecaprenyl-diphosphatase (259 aa).

A run of 7 helical transmembrane segments spans residues 1–21 (MEIF…FLPI), 40–60 (QITL…IIFW), 75–95 (WLTI…ILFE), 101–121 (LFSS…LLYL), 179–199 (SFLL…KDAL), 206–226 (LTWL…YFAI), and 239–259 (TVFA…AGIF).

It belongs to the UppP family.

Its subcellular location is the cell inner membrane. It carries out the reaction di-trans,octa-cis-undecaprenyl diphosphate + H2O = di-trans,octa-cis-undecaprenyl phosphate + phosphate + H(+). Its function is as follows. Catalyzes the dephosphorylation of undecaprenyl diphosphate (UPP). Confers resistance to bacitracin. This chain is Undecaprenyl-diphosphatase, found in Halothermothrix orenii (strain H 168 / OCM 544 / DSM 9562).